The primary structure comprises 116 residues: Secreted RxLR effector protein 9 (116 aa).

An N-terminal signal peptide occupies residues 1–17 (MRLIYIFMVSIVTTLHA). The RxLR-dEER signature appears at 49–64 (RILRGTDGNVNREQER).

The protein belongs to the RxLR effector family.

The protein resides in the secreted. The protein localises to the host cytoplasm. It is found in the host nucleus. In terms of biological role, effector that acts as a broad suppressor of cell death to interrupt plant immunity. Inhibits cell death induced by cell death-inducing proteins, including the PAMP elicitor INF1 from P.infestans. The protein is Secreted RxLR effector protein 9 of Plasmopara viticola (Downy mildew of grapevine).